Reading from the N-terminus, the 135-residue chain is NADH-quinone oxidoreductase subunit K (135 aa).

A run of 3 helical transmembrane segments spans residues 33-53, 63-83, and 95-115; these read VLGLIPMSHGLILAGILFAIG, FLFMLMSLEIMMNAAALAFVV, and IMFIFILTLAAAEAAIGLAIL.

Belongs to the complex I subunit 4L family. In terms of assembly, NDH-1 is composed of 14 different subunits. Subunits NuoA, H, J, K, L, M, N constitute the membrane sector of the complex.

The protein localises to the cell inner membrane. The catalysed reaction is a quinone + NADH + 5 H(+)(in) = a quinol + NAD(+) + 4 H(+)(out). NDH-1 shuttles electrons from NADH, via FMN and iron-sulfur (Fe-S) centers, to quinones in the respiratory chain. The immediate electron acceptor for the enzyme in this species is believed to be ubiquinone. Couples the redox reaction to proton translocation (for every two electrons transferred, four hydrogen ions are translocated across the cytoplasmic membrane), and thus conserves the redox energy in a proton gradient. In Psychrobacter cryohalolentis (strain ATCC BAA-1226 / DSM 17306 / VKM B-2378 / K5), this protein is NADH-quinone oxidoreductase subunit K.